Reading from the N-terminus, the 802-residue chain is Copper-exporting P-type ATPase (802 aa).

HMA domains lie at lysine 5 to valine 71 and glutamate 73 to lysine 139. Cysteine 16, cysteine 19, cysteine 84, and cysteine 87 together coordinate Cu(+). 6 helical membrane passes run leucine 162–threonine 181, tryptophan 196–tyrosine 218, valine 230–glutamine 249, glycine 259–phenylalanine 278, isoleucine 412–tryptophan 434, and phenylalanine 447–alanine 469. Aspartate 499 serves as the catalytic 4-aspartylphosphate intermediate. Mg(2+) contacts are provided by aspartate 698 and aspartate 702. Helical transmembrane passes span leucine 756–leucine 775 and isoleucine 779–leucine 796.

It belongs to the cation transport ATPase (P-type) (TC 3.A.3) family. Type IB subfamily. Monomer at sub-stoichiometric copper concentrations. Homodimer at higher copper concentrations. Forms a heterodimer (electrostatic interactions) with CopZ during the transfer of Cu(+).

The protein resides in the cell membrane. It catalyses the reaction Cu(+)(in) + ATP + H2O = Cu(+)(out) + ADP + phosphate + H(+). Its function is as follows. Involved in copper export. This is Copper-exporting P-type ATPase (copA) from Bacillus subtilis (strain 168).